A 157-amino-acid polypeptide reads, in one-letter code: S-ribosylhomocysteine lyase (157 aa).

3 residues coordinate Fe cation: histidine 54, histidine 58, and cysteine 126.

This sequence belongs to the LuxS family. In terms of assembly, homodimer. Requires Fe cation as cofactor.

The enzyme catalyses S-(5-deoxy-D-ribos-5-yl)-L-homocysteine = (S)-4,5-dihydroxypentane-2,3-dione + L-homocysteine. Its function is as follows. Involved in the synthesis of autoinducer 2 (AI-2) which is secreted by bacteria and is used to communicate both the cell density and the metabolic potential of the environment. The regulation of gene expression in response to changes in cell density is called quorum sensing. Catalyzes the transformation of S-ribosylhomocysteine (RHC) to homocysteine (HC) and 4,5-dihydroxy-2,3-pentadione (DPD). The sequence is that of S-ribosylhomocysteine lyase from Bacillus cereus (strain G9842).